A 230-amino-acid polypeptide reads, in one-letter code: Potassium/proton antiporter CemA (230 aa).

4 consecutive transmembrane segments (helical) span residues 7–27 (LPSF…SFSF), 106–126 (IILH…SFFL), 145–165 (LNDS…VGFH), and 181–201 (LGWA…PVIL).

Belongs to the CemA family.

Its subcellular location is the plastid. The protein resides in the chloroplast inner membrane. The enzyme catalyses K(+)(in) + H(+)(out) = K(+)(out) + H(+)(in). Contributes to K(+)/H(+) antiport activity by supporting proton efflux to control proton extrusion and homeostasis in chloroplasts in a light-dependent manner to modulate photosynthesis. Prevents excessive induction of non-photochemical quenching (NPQ) under continuous-light conditions. Indirectly promotes efficient inorganic carbon uptake into chloroplasts. The sequence is that of Potassium/proton antiporter CemA from Zea mays (Maize).